The chain runs to 677 residues: Spore coat protein SP87 (677 aa).

An N-terminal signal peptide occupies residues 1-21; the sequence is MLFLKNIGVFFMIFLVSKSYA. A DSCP-N domain is found at 22 to 142; it reads TDCNKITNEE…GESICEGLSS (121 aa). The N-linked (GlcNAc...) asparagine glycan is linked to N72. Gly residues predominate over residues 148–174; sequence GGGSSGGTSGGSSSGGTSGGSSSGGTS. A disordered region spans residues 148-184; that stretch reads GGGSSGGTSGGSSSGGTSGGSSSGGTSGSSSSGSSSG. Low complexity predominate over residues 175 to 184; sequence GSSSSGSSSG. Follistatin-like domains lie at 188-210, 231-253, 275-298, 315-338, 355-378, 418-440, 479-501, 515-535, and 571-593; these read SCSTTHCPEGYHCSMVNDVATCL, SCLTTLCPIGHICVEDSNGVNCV, PCRDVDCPDGFHCECKDGKTAKCV, PCKDVTCPDGFHCECKDGKTAKCV, PCSNVNCPDGFYCECKDGKTAKCV, RCSLRCPHGHECKVDHNGKECCV, VCDLDCGRGFECKIRHDGSKCCV, NKRCPPGHECKVDQHGKECCV, and KCSLRCPPGHECKVDQHGKECCV.

In terms of processing, disulfide bonding is important for associating SP87 with the coat. Post-translationally, phosphorylated on serine residues.

It localises to the cytoplasmic vesicle. The protein resides in the secretory vesicle. It is found in the spore coat. May contribute to the structure of the coat at the interface between the middle, cellulosic layer and the outer, electron-dense, proteinaceous layer. This Dictyostelium discoideum (Social amoeba) protein is Spore coat protein SP87 (pspD).